The chain runs to 120 residues: Large ribosomal subunit protein bL19c (120 aa).

This sequence belongs to the bacterial ribosomal protein bL19 family.

It localises to the plastid. The protein localises to the chloroplast. This chain is Large ribosomal subunit protein bL19c, found in Thalassiosira pseudonana (Marine diatom).